We begin with the raw amino-acid sequence, 294 residues long: Pyridoxal 5'-phosphate synthase subunit PdxS (294 aa).

Aspartate 24 serves as a coordination point for D-ribose 5-phosphate. Catalysis depends on lysine 81, which acts as the Schiff-base intermediate with D-ribose 5-phosphate. D-ribose 5-phosphate is bound at residue glycine 153. D-glyceraldehyde 3-phosphate is bound at residue arginine 165. Residues glycine 214 and 235–236 (GS) contribute to the D-ribose 5-phosphate site.

It belongs to the PdxS/SNZ family. In terms of assembly, in the presence of PdxT, forms a dodecamer of heterodimers.

The enzyme catalyses aldehydo-D-ribose 5-phosphate + D-glyceraldehyde 3-phosphate + L-glutamine = pyridoxal 5'-phosphate + L-glutamate + phosphate + 3 H2O + H(+). It functions in the pathway cofactor biosynthesis; pyridoxal 5'-phosphate biosynthesis. Catalyzes the formation of pyridoxal 5'-phosphate from ribose 5-phosphate (RBP), glyceraldehyde 3-phosphate (G3P) and ammonia. The ammonia is provided by the PdxT subunit. Can also use ribulose 5-phosphate and dihydroxyacetone phosphate as substrates, resulting from enzyme-catalyzed isomerization of RBP and G3P, respectively. In Geobacillus thermodenitrificans (strain NG80-2), this protein is Pyridoxal 5'-phosphate synthase subunit PdxS.